The primary structure comprises 528 residues: Equilibrative nucleoside transporter 4 (528 aa).

Residues 1 to 68 (MGSIGSQRLK…EEPVPDDRYH (68 aa)) are Extracellular-facing. The helical transmembrane segment at 69–89 (AIYFAMLLAGVGFLLPYNSFI) threads the bilayer. Residues 90–101 (TDVDYLHHKYPG) are Cytoplasmic-facing. A helical membrane pass occupies residues 102–122 (TSIVFDMSLTYILVALAAVLL). Residues 123–139 (NNVVVERLNLHTRITTG) lie on the Extracellular side of the membrane. A helical transmembrane segment spans residues 140-160 (YLLALGPLLFISICDVWLQLF). At 161–166 (SHDQAY) the chain is on the cytoplasmic side. A helical membrane pass occupies residues 167 to 187 (AINLAAVGTVAFGCTVQQSSF). Topologically, residues 188–231 (YGYTGLLPKRYTQGVMTGESTAGVMISLSRILTKLLLPDERAST) are extracellular. Residues 232–252 (IIFFLVSAGLELLCFLLHLLV) form a helical membrane-spanning segment. Topologically, residues 253–346 (RRSRFVLYYT…LLLHRYVVAR (94 aa)) are cytoplasmic. A helical transmembrane segment spans residues 347–367 (VIWADMLSIAVTYFITLCLFP). Residues 368–376 (GLESEIRHC) lie on the Extracellular side of the membrane. A helical transmembrane segment spans residues 377–397 (VLGEWLPILVMAVFNLSDFVG). At 398–411 (KILAALPVEWRGTH) the chain is on the cytoplasmic side. Residues 412-432 (LLACSCLRVVFIPLFILCVYP) traverse the membrane as a helical segment. Residues 433-445 (SGMPALRHPAWPC) lie on the Extracellular side of the membrane. A helical transmembrane segment spans residues 446–466 (VFSLLMGISNGYFGSVPMILA). At 467–481 (AGKVSPKQRELAGNT) the chain is on the cytoplasmic side. A helical transmembrane segment spans residues 482–504 (MTVSYMSGLTLGSAVAYCTYSLT). Residues 505–528 (RDAHGSCFQTATAAAANDSIPVGP) are Extracellular-facing. N-linked (GlcNAc...) asparagine glycosylation is present at Asn521.

Belongs to the SLC29A/ENT transporter (TC 2.A.57) family. Post-translationally, N-glycosylated. In terms of tissue distribution, expressed in heart. Expressed in choroid plexus.

Its subcellular location is the cell membrane. The protein resides in the apical cell membrane. The enzyme catalyses serotonin(out) = serotonin(in). It catalyses the reaction dopamine(out) = dopamine(in). The catalysed reaction is (R)-noradrenaline(out) = (R)-noradrenaline(in). It carries out the reaction (R)-adrenaline(out) = (R)-adrenaline(in). The enzyme catalyses histamine(out) = histamine(in). It catalyses the reaction tyramine(in) = tyramine(out). The catalysed reaction is guanidine(out) = guanidine(in). It carries out the reaction adenine(out) = adenine(in). The enzyme catalyses adenosine(in) = adenosine(out). With respect to regulation, activated at acidic pH. Electrogenic voltage-dependent transporter that mediates the transport of a variety of endogenous bioactive amines, cationic xenobiotics and drugs. Utilizes the physiologic inside-negative membrane potential as a driving force to facilitate cellular uptake of organic cations. Functions as a Na(+)- and Cl(-)-independent bidirectional transporter. Substrate transport is pH-dependent and enhanced under acidic condition, which is most likely the result of allosteric changes in the transporter structure. Implicated in monoamine neurotransmitters uptake such as serotonin, dopamine, adrenaline/epinephrine, noradrenaline/norepinephrine, histamine and tyramine, thereby supporting a role in homeostatic regulation of aminergic neurotransmission in the central nervous system. Also responsible for the uptake of bioactive amines and drugs through the blood-cerebrospinal fluid (CSF) barrier, from the CSF into choroid plexus epithelial cells, thereby playing a significant role in the clearance of cationic neurotoxins, xenobiotics and metabolic waste in the brain. Involved in bidirectional transport of the purine nucleoside adenosine and plays a role in the regulation of extracellular adenosine concentrations in cardiac tissues, in particular during ischemia. May be involved in organic cation uptake from the tubular lumen into renal tubular cells, thereby contributing to organic cation reabsorption in the kidney. Also transports adenine and guanidine. This Mus musculus (Mouse) protein is Equilibrative nucleoside transporter 4.